Here is a 31-residue protein sequence, read N- to C-terminus: Relaxin B chain (31 aa).

Gln-1 carries the post-translational modification Pyrrolidone carboxylic acid.

Belongs to the insulin family. In terms of assembly, heterodimer of a B chain and an A chain linked by two disulfide bonds.

The protein resides in the secreted. Relaxin is an ovarian hormone that acts with estrogen to produce dilatation of the birth canal in many mammals. This Phocoenoides dalli dalli (Dall's porpoise) protein is Relaxin B chain.